Consider the following 672-residue polypeptide: uncharacterized protein (672 aa).

Residues 1–10 (MAKSDGDDPL) show a composition bias toward basic and acidic residues. The disordered stretch occupies residues 1 to 41 (MAKSDGDDPLRPASPRLRSSRRHSLRYSAYTGGPDPLAPPV).

This is an uncharacterized protein from Mycobacterium bovis (strain ATCC BAA-935 / AF2122/97).